The following is a 100-amino-acid chain: Protein SAMBA (100 aa).

A disordered region spans residues 1–40 (MNGASPAHSLVSTTAVAGGGGSSGAAAGLDDFHFPPDIPS).

In terms of assembly, interacts with CDC27B and CYCA2-3. In terms of tissue distribution, expressed in embryos, germinating seeds, hypocotyls and pollen grains.

Functionally, plays an important role in organ size control. Acts as negative regulator of the anaphase-promoting complex/cyclosome (APC/C). Regulates cell proliferation during early development by targeting CYCA2-3 for APC/C-mediated degradation. Required for mitosis I during pollen microspore development. The chain is Protein SAMBA from Arabidopsis thaliana (Mouse-ear cress).